A 308-amino-acid polypeptide reads, in one-letter code: MNLPNIDQIKTYLLDLQDKICAALAQADGSAKFTEENWVREEGGGGRSRVMVKGAVFEQAGVNFSHVSGAALPASATAHRPELAGRSFQALGVSLVIHPNSPYLPTSHANVRFFIAEKPDEDPVWWFGGGFDLTPFYGFEEDAIHWHQTAYNLCQPFGEQLYSRYKKWCDDYFYIKHRNEARGIGGLFFDDLNSPDFDTCFNFTQAVGDGFLDAYMPIVARRKALCWGEREREFQLYRRGRYVEFNLVWDRGTLFGLQTGGRTESILMSMPPLVRWEYNYQPAADSAEVALYRDFLPVKDWLAAGEHH.

Ser-94 contributes to the substrate binding site. 2 residues coordinate a divalent metal cation: His-98 and His-108. His-108 serves as the catalytic Proton donor. 110–112 lines the substrate pocket; sequence NVR. 2 residues coordinate a divalent metal cation: His-147 and His-177. The important for dimerization stretch occupies residues 242 to 277; the sequence is YVEFNLVWDRGTLFGLQTGGRTESILMSMPPLVRWE. 260–262 contributes to the substrate binding site; that stretch reads GGR.

The protein belongs to the aerobic coproporphyrinogen-III oxidase family. Homodimer. The cofactor is a divalent metal cation.

It localises to the cytoplasm. It catalyses the reaction coproporphyrinogen III + O2 + 2 H(+) = protoporphyrinogen IX + 2 CO2 + 2 H2O. It participates in porphyrin-containing compound metabolism; protoporphyrin-IX biosynthesis; protoporphyrinogen-IX from coproporphyrinogen-III (O2 route): step 1/1. Its function is as follows. Involved in the heme biosynthesis. Catalyzes the aerobic oxidative decarboxylation of propionate groups of rings A and B of coproporphyrinogen-III to yield the vinyl groups in protoporphyrinogen-IX. The protein is Oxygen-dependent coproporphyrinogen-III oxidase of Yersinia enterocolitica serotype O:8 / biotype 1B (strain NCTC 13174 / 8081).